A 74-amino-acid polypeptide reads, in one-letter code: Exodeoxyribonuclease 7 small subunit (74 aa).

It belongs to the XseB family. In terms of assembly, heterooligomer composed of large and small subunits.

Its subcellular location is the cytoplasm. It catalyses the reaction Exonucleolytic cleavage in either 5'- to 3'- or 3'- to 5'-direction to yield nucleoside 5'-phosphates.. In terms of biological role, bidirectionally degrades single-stranded DNA into large acid-insoluble oligonucleotides, which are then degraded further into small acid-soluble oligonucleotides. The polypeptide is Exodeoxyribonuclease 7 small subunit (Glaesserella parasuis serovar 5 (strain SH0165) (Haemophilus parasuis)).